We begin with the raw amino-acid sequence, 258 residues long: Phosphate import ATP-binding protein PstB (258 aa).

Positions 5–247 (IDVSGLNAYY…ERIFSNPSVQ (243 aa)) constitute an ABC transporter domain. 37-44 (GPSGCGKS) contacts ATP.

Belongs to the ABC transporter superfamily. Phosphate importer (TC 3.A.1.7) family. As to quaternary structure, the complex is composed of two ATP-binding proteins (PstB), two transmembrane proteins (PstC and PstA) and a solute-binding protein (PstS).

It localises to the cell membrane. It catalyses the reaction phosphate(out) + ATP + H2O = ADP + 2 phosphate(in) + H(+). Part of the ABC transporter complex PstSACB involved in phosphate import. Responsible for energy coupling to the transport system. The polypeptide is Phosphate import ATP-binding protein PstB (Streptomyces coelicolor (strain ATCC BAA-471 / A3(2) / M145)).